The sequence spans 84 residues: Anthracycline acyl carrier protein DauA (84 aa).

Residues 3–80 (ELSLAELREI…SMLIFVNERL (78 aa)) enclose the Carrier domain. S40 is modified (O-(pantetheine 4'-phosphoryl)serine).

The protein operates within antibiotic biosynthesis; daunorubicin biosynthesis. It participates in antibiotic biosynthesis; carminomycin biosynthesis. It functions in the pathway antibiotic biosynthesis; rhodomycin biosynthesis. Its pathway is antibiotic biosynthesis; aclacinomycin biosynthesis. In terms of biological role, involved in the biosynthesis of aklanonate which is an important precursor common to the formation of the clinically significant anthracyclines such as carminomycin, daunorubicin (daunomycin), rhodomycin, aclacinomycin T (aklavin) and aclacinomycin A (aclarubicin). These compounds are aromatic polyketide antibiotics that exhibit high cytotoxicity and are widely applied in the chemotherapy of a variety of cancers. The polypeptide is Anthracycline acyl carrier protein DauA (dauA) (Streptomyces sp. (strain C5)).